The sequence spans 327 residues: Interleukin-12 subunit beta (327 aa).

Residues 1–22 (MHPQQLVVSWFSLVLLASPIVA) form the signal peptide. Residues 23-106 (IWELEKNVYV…LSRSLLLLHK (84 aa)) enclose the Ig-like C2-type domain. Cysteines 50 and 90 form a disulfide. An N-linked (GlcNAc...) asparagine glycan is attached at Asn223. Positions 238 to 327 (PPKNLQLRPL…WSEWASVSCS (90 aa)) constitute a Fibronectin type-III domain.

Belongs to the IL-12B family. In terms of assembly, heterodimer with IL12A; disulfide-linked. The heterodimer is known as interleukin IL-12. Heterodimer with IL23A; disulfide-linked. The heterodimer is known as interleukin IL-23. Also secreted as a monomer. Interacts with NBR1; this interaction promotes IL-12 secretion.

The protein resides in the secreted. In terms of biological role, cytokine that can act as a growth factor for activated T and NK cells, enhance the lytic activity of NK/lymphokine-activated killer cells, and stimulate the production of IFN-gamma by resting PBMC. Its function is as follows. Associates with IL23A to form the IL-23 interleukin, a heterodimeric cytokine which functions in innate and adaptive immunity. IL-23 may constitute with IL-17 an acute response to infection in peripheral tissues. IL-23 binds to a heterodimeric receptor complex composed of IL12RB1 and IL23R, activates the Jak-Stat signaling cascade, stimulates memory rather than naive T-cells and promotes production of pro-inflammatory cytokines. IL-23 induces autoimmune inflammation and thus may be responsible for autoimmune inflammatory diseases and may be important for tumorigenesis. The sequence is that of Interleukin-12 subunit beta (IL12B) from Capra hircus (Goat).